Here is a 216-residue protein sequence, read N- to C-terminus: Vesicle-associated membrane protein 7A (216 aa).

Residues Met-1–Lys-189 are Cytoplasmic-facing. One can recognise a Longin domain in the interval Ile-6–Leu-112. The 61-residue stretch at Lys-126–Gln-186 folds into the v-SNARE coiled-coil homology domain. Residues Leu-190–Leu-210 form a helical; Anchor for type IV membrane protein membrane-spanning segment. At Lys-211 to Ile-216 the chain is on the vesicular side.

The protein belongs to the synaptobrevin family. As to quaternary structure, component of the SNARE complex composed of syn7A, syn8A, vamp7A and vti1A.

It localises to the cytoplasmic vesicle. The protein resides in the secretory vesicle membrane. Its subcellular location is the golgi apparatus. The protein localises to the trans-Golgi network membrane. It is found in the late endosome membrane. It localises to the lysosome membrane. The protein resides in the endoplasmic reticulum membrane. Its subcellular location is the phagosome membrane. Its function is as follows. Involved in the targeting and/or fusion of transport vesicles to their target membrane during transport of proteins from the early endosome to the lysosome. Required for heterotypic fusion of late endosomes with lysosomes and homotypic lysosomal fusion. Required for calcium regulated lysosomal exocytosis. This Dictyostelium discoideum (Social amoeba) protein is Vesicle-associated membrane protein 7A.